Consider the following 468-residue polypeptide: Trehalose-binding lipoprotein LpqY (468 aa).

Residues 1–25 form the signal peptide; sequence MVMSRGRIPRLGAAVLVALTTAAAA. Residue cysteine 26 is the site of N-palmitoyl cysteine attachment. A lipid anchor (S-diacylglycerol cysteine) is attached at cysteine 26. A disulfide bond links cysteine 54 and cysteine 372. Aspartate 97, asparagine 151, tryptophan 276, phenylalanine 278, glycine 351, and arginine 421 together coordinate alpha,alpha-trehalose.

Belongs to the bacterial solute-binding protein 1 family. In terms of assembly, monomer. The complex is composed of two ATP-binding proteins (SugC), two transmembrane proteins (SugA and SugB) and a solute-binding protein (LpqY).

The protein localises to the cell inner membrane. Functionally, part of the ABC transporter complex LpqY-SugA-SugB-SugC, which is highly specific for uptake of trehalose. Involved in the recycling of extracellular trehalose released from trehalose-containing molecules synthesized by M.tuberculosis. Trehalose uptake is essential for virulence. The sequence is that of Trehalose-binding lipoprotein LpqY (lpqY) from Mycobacterium tuberculosis (strain CDC 1551 / Oshkosh).